A 475-amino-acid polypeptide reads, in one-letter code: Putative UDP-glucose glucosyltransferase (475 aa).

Belongs to the UDP-glycosyltransferase family.

This is Putative UDP-glucose glucosyltransferase from Fragaria ananassa (Strawberry).